The following is a 482-amino-acid chain: Membrane-bound lytic murein transglycosylase F (482 aa).

A signal peptide spans 1-18; sequence MKGLFIRIVLAICLSLWA. The non-LT domain stretch occupies residues 19–266; that stretch reads IDMVFPWQQI…RIEEKYFNHL (248 aa). Residues 267–482 are LT domain; the sequence is NQFDYVDTRS…ISTQTQQEQR (216 aa). The active site involves Glu311.

It in the N-terminal section; belongs to the bacterial solute-binding protein 3 family. This sequence in the C-terminal section; belongs to the transglycosylase Slt family.

It is found in the cell outer membrane. The catalysed reaction is Exolytic cleavage of the (1-&gt;4)-beta-glycosidic linkage between N-acetylmuramic acid (MurNAc) and N-acetylglucosamine (GlcNAc) residues in peptidoglycan, from either the reducing or the non-reducing ends of the peptidoglycan chains, with concomitant formation of a 1,6-anhydrobond in the MurNAc residue.. Its function is as follows. Murein-degrading enzyme that degrades murein glycan strands and insoluble, high-molecular weight murein sacculi, with the concomitant formation of a 1,6-anhydromuramoyl product. Lytic transglycosylases (LTs) play an integral role in the metabolism of the peptidoglycan (PG) sacculus. Their lytic action creates space within the PG sacculus to allow for its expansion as well as for the insertion of various structures such as secretion systems and flagella. This is Membrane-bound lytic murein transglycosylase F from Histophilus somni (strain 129Pt) (Haemophilus somnus).